We begin with the raw amino-acid sequence, 353 residues long: Protein-glutamate methylesterase/protein-glutamine glutaminase 3 (353 aa).

The region spanning 3–120 (KVLIADDSAL…SSSSDMKKVA (118 aa)) is the Response regulatory domain. Residue Asp54 is modified to 4-aspartylphosphate. Residues 158–353 (PRPGREVTKA…AREIIRAVNR (196 aa)) enclose the CheB-type methylesterase domain. Active-site residues include Ser173, His200, and Asp296.

The protein belongs to the CheB family. In terms of processing, phosphorylated by CheA. Phosphorylation of the N-terminal regulatory domain activates the methylesterase activity.

The protein localises to the cytoplasm. The enzyme catalyses [protein]-L-glutamate 5-O-methyl ester + H2O = L-glutamyl-[protein] + methanol + H(+). It carries out the reaction L-glutaminyl-[protein] + H2O = L-glutamyl-[protein] + NH4(+). Functionally, involved in chemotaxis. Part of a chemotaxis signal transduction system that modulates chemotaxis in response to various stimuli. Catalyzes the demethylation of specific methylglutamate residues introduced into the chemoreceptors (methyl-accepting chemotaxis proteins or MCP) by CheR. Also mediates the irreversible deamidation of specific glutamine residues to glutamic acid. This chain is Protein-glutamate methylesterase/protein-glutamine glutaminase 3, found in Syntrophomonas wolfei subsp. wolfei (strain DSM 2245B / Goettingen).